Here is a 402-residue protein sequence, read N- to C-terminus: Multidrug resistance protein MdtH (402 aa).

The Cytoplasmic segment spans residues 1-12; that stretch reads MSRVSQARNLGK. A helical transmembrane segment spans residues 13–33; it reads YFLLIDNMLVVLGFFVVFPLI. Residues 34–98 are Periplasmic-facing; the sequence is SIRFVDQMGW…GFATMGIAHE (65 aa). A helical transmembrane segment spans residues 99–116; sequence PWLLWFSCLLSGLGGTLF. Topologically, residues 117–138 are cytoplasmic; sequence DPPRSALVVKLIRPQQRCRFFS. The helical transmembrane segment at 139–159 threads the bilayer; that stretch reads LLMMQDSAGAVIGALLGSWLL. The Periplasmic segment spans residues 160–164; the sequence is QYDFR. Residues 165–185 form a helical membrane-spanning segment; it reads LVCATGAVLFVLCAAFNAWLL. Residues 186–213 lie on the Cytoplasmic side of the membrane; sequence PAWKLSTVRTPVREGMTRVMRDKRFVTY. Residues 214-234 traverse the membrane as a helical segment; the sequence is VLTLAGYYMLAVQVMLMLPIM. The Periplasmic segment spans residues 235–243; that stretch reads VNDVAGAPS. Residues 244–264 form a helical membrane-spanning segment; the sequence is AVKWMYAIEACLSLTLLYPIA. Residues 265-276 are Cytoplasmic-facing; that stretch reads RWSEKHFRLEHR. Residues 277 to 297 form a helical membrane-spanning segment; the sequence is LMAGLLIMSLSMMPVGMVSGL. At 298–299 the chain is on the periplasmic side; sequence QQ. Residues 300–320 traverse the membrane as a helical segment; it reads LFTLICLFYIGSIIAEPARET. Residues 321-339 lie on the Cytoplasmic side of the membrane; sequence LSALLADARARGSYMGFSR. The helical transmembrane segment at 340–360 threads the bilayer; it reads LGLAIGGAIGYIGGGWLFDLG. Residues 361–367 lie on the Periplasmic side of the membrane; sequence KSAHQPE. A helical transmembrane segment spans residues 368–388; that stretch reads LPWMMLGIIGIFTFLALGWQF. Topologically, residues 389 to 402 are cytoplasmic; sequence SQKRATRRLLERDA.

This sequence belongs to the major facilitator superfamily. DHA1 family. MdtH (TC 2.A.1.2.21) subfamily.

It is found in the cell inner membrane. This chain is Multidrug resistance protein MdtH, found in Shigella sonnei (strain Ss046).